The following is a 402-amino-acid chain: NADH-quinone oxidoreductase subunit D (402 aa).

Belongs to the complex I 49 kDa subunit family. In terms of assembly, NDH-1 is composed of 14 different subunits. Subunits NuoB, C, D, E, F, and G constitute the peripheral sector of the complex.

It localises to the cell inner membrane. It carries out the reaction a quinone + NADH + 5 H(+)(in) = a quinol + NAD(+) + 4 H(+)(out). Its function is as follows. NDH-1 shuttles electrons from NADH, via FMN and iron-sulfur (Fe-S) centers, to quinones in the respiratory chain. The immediate electron acceptor for the enzyme in this species is believed to be ubiquinone. Couples the redox reaction to proton translocation (for every two electrons transferred, four hydrogen ions are translocated across the cytoplasmic membrane), and thus conserves the redox energy in a proton gradient. The polypeptide is NADH-quinone oxidoreductase subunit D (Rhodopseudomonas palustris (strain TIE-1)).